Reading from the N-terminus, the 340-residue chain is MRKVIPILGILLLSFIILGCLGSESREARLIIFHAGSLSIPLSQVEEKFTKYAQEKLGVKVTFQDEASGSVKAVRKVTDLKKRADIVAVADYTLIPQLMIPNYTDFYVLFATNEIVIAFTNKSKYADEMLKNPDKWYEILSRPDVSFGFSDPNQDPCGYRSVMVMKLAELYYGRPIFKELVEKTTNIYSNGTRIYAPKEIIIKDKRVIMRPKETDLVGLVESGSLDYIFIYKSVAKQHHLSYITLPDDINLGDFNKADFYGRVSITLGSTGKTIKAKPIVYGITVLKNAPNRELAIEFLRFLLGNEGRKIFEDNYQEFLSPPVAFGNVPPEIRRLVEVKD.

An N-terminal signal peptide occupies residues 1–22; sequence MRKVIPILGILLLSFIILGCLG. Residues 36-37, S70, 155-157, E213, and Y231 contribute to the molybdate site; these read GS and DPC. Tungstate contacts are provided by residues 36–37, S70, 155–157, E213, and Y231; these read GS and DPC.

It belongs to the bacterial solute-binding protein 1 family. WtpA subfamily. In terms of assembly, the complex is composed of two ATP-binding proteins (WtpC), two transmembrane proteins (WtpB) and a solute-binding protein (WtpA).

The protein localises to the cell membrane. Its function is as follows. Part of the ABC transporter complex WtpABC involved in molybdate/tungstate import. Binds tungstate and molybdate. This is Molybdate/tungstate-binding protein WtpA (wtpA) from Pyrococcus horikoshii (strain ATCC 700860 / DSM 12428 / JCM 9974 / NBRC 100139 / OT-3).